A 638-amino-acid polypeptide reads, in one-letter code: Plasma kallikrein (638 aa).

The N-terminal stretch at 1–19 (MILFKQATYFISLFATVSC) is a signal peptide. 4 consecutive Apple domains span residues 21 to 104 (CLTQ…LKQC), 111 to 194 (CHRD…LKPC), 201 to 284 (CHMN…LLTC), and 292 to 375 (CHSK…LRLC). 18 disulfides stabilise this stretch: cysteine 21-cysteine 104, cysteine 47-cysteine 77, cysteine 51-cysteine 57, cysteine 111-cysteine 194, cysteine 137-cysteine 166, cysteine 141-cysteine 147, cysteine 201-cysteine 284, cysteine 227-cysteine 256, cysteine 231-cysteine 237, cysteine 292-cysteine 375, cysteine 318-cysteine 347, cysteine 322-cysteine 328, cysteine 340-cysteine 345, cysteine 383-cysteine 503, cysteine 419-cysteine 435, cysteine 517-cysteine 584, cysteine 548-cysteine 563, and cysteine 574-cysteine 602. N-linked (GlcNAc...) asparagine glycosylation occurs at asparagine 127. The N-linked (GlcNAc...) asparagine glycan is linked to asparagine 308. One can recognise a Peptidase S1 domain in the interval 391–626 (IVGGTNSSWG…YMDWILEKTQ (236 aa)). A glycan (N-linked (GlcNAc...) asparagine) is linked at asparagine 396. Histidine 434 (charge relay system) is an active-site residue. Asparagine 453 carries an N-linked (GlcNAc...) asparagine glycan. Aspartate 483 serves as the catalytic Charge relay system. N-linked (GlcNAc...) asparagine glycosylation is present at asparagine 494. Serine 578 functions as the Charge relay system in the catalytic mechanism.

This sequence belongs to the peptidase S1 family. Plasma kallikrein subfamily. In terms of assembly, forms a heterodimer with SERPINA5. The zymogen is activated by factor XIIa, which cleaves the molecule into a light chain, which contains the active site, and a heavy chain, which associates with HMW kininogen. These chains are linked by one or more disulfide bonds. Interacts with iripin-3, a serine protease inhibitor from Ixodes ricinus saliva. Interacts with iripin-1, a serine protease inhibitor from Ixodes ricinus saliva. In terms of tissue distribution, found in plasma (at protein level).

The protein resides in the secreted. The catalysed reaction is Cleaves selectively Arg-|-Xaa and Lys-|-Xaa bonds, including Lys-|-Arg and Arg-|-Ser bonds in (human) kininogen to release bradykinin.. Its activity is regulated as follows. Inhibited by SERPINA5. In terms of biological role, participates in the surface-dependent activation of blood coagulation. Activates, in a reciprocal reaction, coagulation factor XII/F12 after binding to negatively charged surfaces. Releases bradykinin from HMW kininogen and may also play a role in the renin-angiotensin system by converting prorenin into renin. This is Plasma kallikrein (KLKB1) from Homo sapiens (Human).